The chain runs to 450 residues: Probable ECA polymerase (450 aa).

The next 11 membrane-spanning stretches (helical) occupy residues 6–26, 37–57, 63–83, 120–140, 155–175, 181–201, 207–227, 228–248, 341–361, 378–398, and 410–430; these read FSGL…LTWF, VFFS…TSVL, VGVA…CFYA, LMGI…FLLF, GVAL…IYFL, AWLF…MIVG, IIIA…ISLW, MLVA…LKRY, LVVM…GLII, YKAA…IVLA, and VFFL…FWLF.

Belongs to the WzyE family. Probably part of a complex composed of WzxE, WzyE and WzzE.

The protein localises to the cell inner membrane. Its pathway is bacterial outer membrane biogenesis; enterobacterial common antigen biosynthesis. Its function is as follows. Probably involved in the polymerization of enterobacterial common antigen (ECA) trisaccharide repeat units. The protein is Probable ECA polymerase of Citrobacter koseri (strain ATCC BAA-895 / CDC 4225-83 / SGSC4696).